The primary structure comprises 389 residues: Gustatory receptor 68a (389 aa).

Topologically, residues 1 to 42 (MKIYQDIYPISKPSQIFAILPFYSGDVDDGFRFGGLGRWYGR) are cytoplasmic. A helical transmembrane segment spans residues 43 to 63 (LVALIILIGSLTLGEDVLFAS). Residues 64–82 (KEYRLVASAQGDTEEINRT) are Extracellular-facing. N80 carries N-linked (GlcNAc...) asparagine glycosylation. The chain crosses the membrane as a helical span at residues 83 to 103 (IETLLCIISYTMVVLSSVQNA). Residues 104–133 (SRHFRTLHDIAKIDEYLLANGFRETYSCRN) lie on the Cytoplasmic side of the membrane. The helical transmembrane segment at 134–154 (LTILVTSAAGGVLAVAFYYIH) threads the bilayer. Residues 155–164 (YRSGIGAKRQ) are Extracellular-facing. A helical transmembrane segment spans residues 165–185 (IILLLIYFLQLLYSTLLALYL). The Cytoplasmic segment spans residues 186–236 (RTLMMNLAQRIGFLNQKLDTFNLQDCGHMENWRELSNLIEVLCKFRYITEN). The helical transmembrane segment at 237–257 (INCVAGVSLLFYFGFSFYTVT) threads the bilayer. Residue N258 is glycosylated (N-linked (GlcNAc...) asparagine). Topologically, residues 258 to 281 (NQSYLAFATLTAGSLSSKTEVADT) are extracellular. The helical transmembrane segment at 282–302 (IGLSCIWVLAETITMIVICSA) threads the bilayer. The Cytoplasmic portion of the chain corresponds to 303 to 352 (CDGLASEVNGTAQILARIYGKSKQFQNLIDKFLTKSIKQDLQFTAYGFFS). A helical membrane pass occupies residues 353 to 373 (IDNSTLFKIFSAVTTYLVILI). Residues 374 to 389 (QFKQLEDSKVEDISQA) are Extracellular-facing.

It belongs to the insect chemoreceptor superfamily. Gustatory receptor (GR) family. Gr21a subfamily. As to expression, expressed in chemosensory neurons of about 20 male-specific gustatory bristles in the forelegs. No expression is seen in the mechanosensory neurons. In larvae, expressed in the ventral pharyngeal sense organ.

Its subcellular location is the cell membrane. In terms of biological role, dsx-dependent essential component of pheromone-driven courtship behavior. Recognizes a female pheromone involved in the second step (tapping step) of the courtship display which is essential for efficient execution of the entire courtship sequence and timely mating. Required for detection of the male sex pheromone CH503 which is transferred from males to females during mating and inhibits courtship behavior by other males. Gr68a-expressing neurons in the male foreleg relay signals to the suboesophageal zone (SEZ) and courtship suppression is mediated by the release of the neuropeptide tachykinin from a cluster of 8-10 neurons in the SEZ. The polypeptide is Gustatory receptor 68a (Gr68a) (Drosophila melanogaster (Fruit fly)).